A 246-amino-acid polypeptide reads, in one-letter code: tRNA (guanine-N(1)-)-methyltransferase (246 aa).

Residues glycine 112 and 131–136 each bind S-adenosyl-L-methionine; that span reads IGDYVL.

Belongs to the RNA methyltransferase TrmD family. In terms of assembly, homodimer.

It is found in the cytoplasm. It carries out the reaction guanosine(37) in tRNA + S-adenosyl-L-methionine = N(1)-methylguanosine(37) in tRNA + S-adenosyl-L-homocysteine + H(+). Specifically methylates guanosine-37 in various tRNAs. The chain is tRNA (guanine-N(1)-)-methyltransferase from Thermosipho melanesiensis (strain DSM 12029 / CIP 104789 / BI429).